The following is a 214-amino-acid chain: Small ribosomal subunit protein uS5 (214 aa).

A disordered region spans residues 1–61 (MTDSSPQSNP…QERDSEWQER (61 aa)). Positions 9–29 (NPNAVPGAADVPAAAEGQQQQ) are enriched in low complexity. Over residues 30-60 (EQRRGRGDRDGRRGDRRGGRRGQERDSEWQE) the composition is skewed to basic and acidic residues. The S5 DRBM domain maps to 58–121 (WQERVVQIRR…ADGKKHLVKV (64 aa)).

It belongs to the universal ribosomal protein uS5 family. In terms of assembly, part of the 30S ribosomal subunit. Contacts proteins S4 and S8.

With S4 and S12 plays an important role in translational accuracy. In terms of biological role, located at the back of the 30S subunit body where it stabilizes the conformation of the head with respect to the body. The chain is Small ribosomal subunit protein uS5 from Synechococcus sp. (strain CC9605).